The following is a 101-amino-acid chain: Small ribosomal subunit protein uS14 (101 aa).

Belongs to the universal ribosomal protein uS14 family. In terms of assembly, part of the 30S ribosomal subunit. Contacts proteins S3 and S10.

Functionally, binds 16S rRNA, required for the assembly of 30S particles and may also be responsible for determining the conformation of the 16S rRNA at the A site. In Haemophilus ducreyi (strain 35000HP / ATCC 700724), this protein is Small ribosomal subunit protein uS14.